A 652-amino-acid polypeptide reads, in one-letter code: Acetyl-coenzyme A synthetase (652 aa).

CoA is bound by residues 189–192 and Thr311; that span reads RGGK. ATP contacts are provided by residues 387–389, 411–416, Asp500, and Arg515; these read GEP and DTWWQT. Ser523 provides a ligand contact to CoA. Residue Arg526 coordinates ATP. The Mg(2+) site is built by Val537, His539, and Val542. Arg584 provides a ligand contact to CoA. The residue at position 609 (Lys609) is an N6-acetyllysine.

It belongs to the ATP-dependent AMP-binding enzyme family. The cofactor is Mg(2+). Post-translationally, acetylated. Deacetylation by the SIR2-homolog deacetylase activates the enzyme.

The enzyme catalyses acetate + ATP + CoA = acetyl-CoA + AMP + diphosphate. Catalyzes the conversion of acetate into acetyl-CoA (AcCoA), an essential intermediate at the junction of anabolic and catabolic pathways. AcsA undergoes a two-step reaction. In the first half reaction, AcsA combines acetate with ATP to form acetyl-adenylate (AcAMP) intermediate. In the second half reaction, it can then transfer the acetyl group from AcAMP to the sulfhydryl group of CoA, forming the product AcCoA. In Rhizobium rhizogenes (Agrobacterium rhizogenes), this protein is Acetyl-coenzyme A synthetase.